Reading from the N-terminus, the 67-residue chain is Peptide Hp1239 (67 aa).

An N-terminal signal peptide occupies residues 1–23; the sequence is MKTQFTVLLITLVLFQMLSQSEA. The residue at position 36 (F36) is a Phenylalanine amide. Positions 40-67 are excised as a propeptide; that stretch reads GLSDLSDLDELFDGEITKADLDLLREIM.

The protein belongs to the non-disulfide-bridged peptide (NDBP) superfamily. Short antimicrobial peptide (group 4) family. As to expression, expressed by the venom gland.

Its subcellular location is the secreted. The protein localises to the target cell membrane. Functionally, amphipathic peptide with antibacterial activities. Shows antiviral activities against the herpes simplex virus type-1. It potently inhibits the initial infection by provoking the rupture of viral envelop and the dissociation of proteins from the virions (EC(50) is 0.41 uM). It also effectively inhibits viral attachment (EC(50) is 5.73 uM), viral entry (EC(50) is 4.32 uM) and viral proliferation after infection (EC(50) is 8.41 uM). Morever, it enters mammalian tested cells (Vero) and reduces the intracellular infectivity. The chain is Peptide Hp1239 from Heterometrus petersii (Asian forest scorpion).